We begin with the raw amino-acid sequence, 187 residues long: UPF0232 protein JTY_0004 (187 aa).

Basic and acidic residues-rich tracts occupy residues 1-17 (MTGS…ERSM) and 24-45 (LVRR…DAGR). Disordered stretches follow at residues 1–75 (MTGS…DPQP) and 168–187 (PSWR…DTYG).

This sequence belongs to the UPF0232 family.

The protein is UPF0232 protein JTY_0004 of Mycobacterium bovis (strain BCG / Tokyo 172 / ATCC 35737 / TMC 1019).